Here is an 819-residue protein sequence, read N- to C-terminus: MASSLVFVALVGALCFTLANAQHHYDEHKTTRMVWCTKSQAEQYKCQNLTVAIERDRALFDEVFLNLTCFMAYSADECIHHIDREKAHITTLDAGDVFTAGRYNSLIPIMQEKLEGGFADYQSVAVIKKGSLPDLNNLRDMRNKRVCFPWVGSLAGWIVPIHTLQREGGMEVVDCNNQVKTAASYFNNSCAVYSLSDKHNPIGDNSDKLCTLCTGKIPGGRCSSADPYFGYEGAFKCLLEKGDVAFLRHSTVNEMLQTTEFKNIAPDTFELLCRDGRRASINDYRQCNWGQVPADAIVTSSARSFSDRKQYQQFLKRIAELYSDGTRDDQSRQGGQSFNSRNNINDQNAYGQFDNNDPYRTQNQYDQYRSERLDSSFAEERNQQDGTNTSILYEKFRIFESKRYGKPNLLFQDSSRALTVIPEDDQSFTKYLGPAINFIYGIRECPVPAMTLCVTSENELDKCIKMRTALKAHLLKPELICKKMHSHINCMQFIEAGKADISVFDAGDVYTGGLNYDLVPFMSEVYNLGEPEYYVVAVAKEDDPDTELTYLKGKNTCHTGINTAAGWTYPMALFISNGWIRPYGCDSVRAAAEYFTKSCVPGAISNEYNTGVPYDSMCDLCHGTSYRYCRRDASEEYYGHTGAFRCLVEGGGHVAFMKHTTVMESTGGKRKEWWARNALNDDFELLCTDGTRAEIQDYKRCNLGKVKANAVVTRGGVNYNETQMNAYINLLTYAQQLYGRKEVDAFSFSMFSSPIGHYDLIFQDATRQLQVIPPNKRRYDAYLGSDFMRARRITDCYAGASQLALSVGLLLVGSLVAML.

An N-terminal signal peptide occupies residues 1 to 21 (MASSLVFVALVGALCFTLANA). The Transferrin-like 1 domain maps to 33 to 373 (MVWCTKSQAE…QYDQYRSERL (341 aa)). Disulfide bonds link Cys-36/Cys-78 and Cys-46/Cys-69. Residues Asn-48 and Asn-66 are each glycosylated (N-linked (GlcNAc...) asparagine). Residues Asp-93 and Tyr-121 each contribute to the Fe(3+) site. Disulfide bonds link Cys-147–Cys-237, Cys-190–Cys-213, and Cys-273–Cys-287. Hydrogencarbonate is bound by residues Ala-155 and Gly-156. Asn-187 is a glycosylation site (N-linked (GlcNAc...) asparagine). Tyr-231 is a binding site for Fe(3+). The disordered stretch occupies residues 325 to 361 (GTRDDQSRQGGQSFNSRNNINDQNAYGQFDNNDPYRT). Residues 332–361 (RQGGQSFNSRNNINDQNAYGQFDNNDPYRT) are compositionally biased toward polar residues. A glycan (N-linked (GlcNAc...) asparagine) is linked at Asn-388. The 347-residue stretch at 450–796 (MTLCVTSENE…FMRARRITDC (347 aa)) folds into the Transferrin-like 2 domain. Disulfide bonds link Cys-453–Cys-490 and Cys-463–Cys-481. Fe(3+) contacts are provided by Asp-505 and Tyr-533. Disulfide bonds link Cys-557-Cys-646, Cys-599-Cys-621, Cys-618-Cys-629, and Cys-687-Cys-701. Positions 559, 565, and 566 each coordinate hydrogencarbonate. The N-linked (GlcNAc...) asparagine glycan is linked to Asn-720. Cys-796 is lipidated: GPI-anchor amidated cysteine. Residues 797 to 819 (YAGASQLALSVGLLLVGSLVAML) constitute a propeptide, removed in mature form.

Belongs to the transferrin family. As to quaternary structure, forms a complex composed of septa junction proteins Nrx-IV/Nrx, Tsf2/MTf, Cont and Nrg during late embryogenesis.

It is found in the apicolateral cell membrane. The protein resides in the cell junction. The protein localises to the septate junction. Functionally, iron-binding protein and component of septate junctions that form the paracellular permeability barrier in epithelial tissues. In an iron-dependent manner, required for septate junction assembly during epithelial maturation in embryos and mature septa junctions stability. This Drosophila melanogaster (Fruit fly) protein is Transferrin 2.